The following is a 325-amino-acid chain: Lipoyl synthase (325 aa).

The tract at residues 1–31 (MASDSDLLDTKPAETRHPEKAHRPDQPTLRK) is disordered. Positions 8 to 31 (LDTKPAETRHPEKAHRPDQPTLRK) are enriched in basic and acidic residues. 7 residues coordinate [4Fe-4S] cluster: cysteine 61, cysteine 66, cysteine 72, cysteine 87, cysteine 91, cysteine 94, and serine 300. One can recognise a Radical SAM core domain in the interval 73 to 289 (WAKKHATFMI…AEIGRAKGFL (217 aa)).

Belongs to the radical SAM superfamily. Lipoyl synthase family. [4Fe-4S] cluster is required as a cofactor.

It localises to the cytoplasm. The catalysed reaction is [[Fe-S] cluster scaffold protein carrying a second [4Fe-4S](2+) cluster] + N(6)-octanoyl-L-lysyl-[protein] + 2 oxidized [2Fe-2S]-[ferredoxin] + 2 S-adenosyl-L-methionine + 4 H(+) = [[Fe-S] cluster scaffold protein] + N(6)-[(R)-dihydrolipoyl]-L-lysyl-[protein] + 4 Fe(3+) + 2 hydrogen sulfide + 2 5'-deoxyadenosine + 2 L-methionine + 2 reduced [2Fe-2S]-[ferredoxin]. It functions in the pathway protein modification; protein lipoylation via endogenous pathway; protein N(6)-(lipoyl)lysine from octanoyl-[acyl-carrier-protein]: step 2/2. Catalyzes the radical-mediated insertion of two sulfur atoms into the C-6 and C-8 positions of the octanoyl moiety bound to the lipoyl domains of lipoate-dependent enzymes, thereby converting the octanoylated domains into lipoylated derivatives. The chain is Lipoyl synthase from Methylocella silvestris (strain DSM 15510 / CIP 108128 / LMG 27833 / NCIMB 13906 / BL2).